A 181-amino-acid polypeptide reads, in one-letter code: Monofunctional chorismate mutase (181 aa).

A signal peptide spans 1 to 20 (MIRHIAIFLCSLLMCSTTFA). One can recognise a Chorismate mutase domain in the interval 21–102 (DSVTSVSLGA…ASKAIQYRYL (82 aa)). Substrate is bound by residues arginine 38, lysine 49, aspartate 58, glutamate 62, and glutamine 98.

The protein localises to the periplasm. It carries out the reaction chorismate = prephenate. It functions in the pathway metabolic intermediate biosynthesis; prephenate biosynthesis; prephenate from chorismate: step 1/1. Functionally, catalyzes the Claisen rearrangement of chorismate to prephenate. The sequence is that of Monofunctional chorismate mutase from Salmonella typhimurium.